Consider the following 273-residue polypeptide: 5-deoxy-glucuronate isomerase (273 aa).

Belongs to the isomerase IolB family.

It carries out the reaction 5-deoxy-D-glucuronate = 5-dehydro-2-deoxy-D-gluconate. The protein operates within polyol metabolism; myo-inositol degradation into acetyl-CoA; acetyl-CoA from myo-inositol: step 4/7. Involved in the isomerization of 5-deoxy-glucuronate (5DG) to 5-dehydro-2-deoxy-D-gluconate (DKG or 2-deoxy-5-keto-D-gluconate). In Listeria monocytogenes serovar 1/2a (strain ATCC BAA-679 / EGD-e), this protein is 5-deoxy-glucuronate isomerase.